Here is a 326-residue protein sequence, read N- to C-terminus: tRNA-modifying protein YgfZ (326 aa).

Folate contacts are provided by Trp-27 and Trp-189.

Belongs to the tRNA-modifying YgfZ family.

It localises to the cytoplasm. Folate-binding protein involved in regulating the level of ATP-DnaA and in the modification of some tRNAs. It is probably a key factor in regulatory networks that act via tRNA modification, such as initiation of chromosomal replication. This chain is tRNA-modifying protein YgfZ, found in Escherichia coli O157:H7 (strain EC4115 / EHEC).